A 942-amino-acid chain; its full sequence is Calcium-activated chloride channel regulator 2 (942 aa).

The N-terminal stretch at 1–32 (MTHRDSTGPVIGLKLVTLLFTLSPELLFLGAG) is a signal peptide. Residues 33–905 (LKLKENGYDG…SRDDLILKGV (873 aa)) lie on the Extracellular side of the membrane. Residues 54 to 205 (DLKLITNIKE…CSSDITGVFV (152 aa)) form a metalloprotease domain region. N74 and N97 each carry an N-linked (GlcNAc...) asparagine glycan. Residue H164 coordinates Zn(2+). Residue E165 is part of the active site. Positions 168 and 175 each coordinate Zn(2+). N-linked (GlcNAc...) asparagine glycosylation is found at N231, N235, N254, and N286. The 173-residue stretch at 311 to 483 (VVCLVIDVSR…NGMTEAFVRI (173 aa)) folds into the VWFA domain. 4 N-linked (GlcNAc...) asparagine glycosylation sites follow: N522, N580, N637, and N821. The helical transmembrane segment at 906 to 926 (LTTVGLIAILCLIMVVAHCIF) threads the bilayer. Residues 927 to 942 (NRKKRPSRKENETKFL) are Cytoplasmic-facing.

It belongs to the CLCR family. In terms of processing, the translation product is autoproteolytically cleaved by the metalloprotease domain in the endoplasmic reticulum into a N-terminal and a C-terminal products that remain physically associated with each other. The cleavage is necessary for calcium-activated chloride channel (CaCC) activation activity. N-glycosylated. As to expression, highly expressed in eye, spleen, lung, kidney, uterus, and endothelial cells. Weakly expressed in heart and throughout the gastrointestinal tract. Highly expressed in mammary cell lines. Its expression in immortalized cell line HC11 correlates with slow or arrested growth. Re-expression in mammary tumor cells reduces colony survival.

It is found in the cell membrane. The protein resides in the basal cell membrane. The protein localises to the cell junction. Plays a role in modulating chloride current across the plasma membrane in a calcium-dependent manner, and cell adhesion. Involved in basal cell adhesion and/or stratification of squamous epithelia. May act as a tumor suppressor in breast and colorectal cancer. Plays a key role for cell adhesion in the beginning stages of lung metastasis via the binding to ITGB4. The sequence is that of Calcium-activated chloride channel regulator 2 (Clca2) from Mus musculus (Mouse).